We begin with the raw amino-acid sequence, 44 residues long: YSRCQLQGFNCVVRSYGLPTIPCCRGLTCRSYFPGSTYGRCQRF.

3 disulfide bridges follow: C4–C24, C11–C29, and C23–C41.

Granular hemocytes, small secretory granules.

The protein resides in the secreted. In terms of biological role, exhibits stronger antimicrobial activity against the Gram-positive bacteria (S.aureus (IC(50) is 4.2 ug/ml)) and fungi (C.albicans (IC(50) is 3.0 ug/ml) and P.pastoris (IC(50) is 0.5 ug/ml)) than Gram-negative bacteria (E.coli (IC(50) is 25 ug/ml)). Binds to chitin (8.4 uM are required to obtain 50% of binding). Does not cause hemolysis on sheep erythrocytes. Has no blocking activity on the P-type calcium channel. This is Tachystatin-A1 from Tachypleus tridentatus (Japanese horseshoe crab).